A 1242-amino-acid chain; its full sequence is MAENIMVDSHVWVEDPERAWIDGVVLNIKGEEAEIKTNDGRDVIANLSRLYPKDTEAPSEGVEDMTRLSYLHEPAVLDNLATRYELNEIYTYTGNILIAVNPFQGLPHLYDAEVMEKYKEAYFKELNPHVFAIGGIAYREMINEGRNKCILVSGESGSGKTETTKMLMRYLAYFGGHTAVEGRTVENQVLESNPVLEAFGNAKTVKNNNSSRFGKFVEIQFDDVGRISGAAIRTYLLERSRVCQVSDPERNYHCFYLLCAAPPEDVERFKLGDPKSFRYLNQSSCYKLDGVNDAEEYLATRRAMDVVGISEKEQDAIFRVVASILHLGNIEFSKGEDADSSSVKDEQSMFHLQMTSELLMCDPHSLEDALCKRMMVTPEEVIKRSLDPLGAAVSRDGLAKTIYSRLFDWLVNKINISIGQDSHSRRLIGVLDIYGFESFKTNSFEQFCINYTNEKLQQHFNQHVFKMEQGEYQKEEIDWSYVEFVDNKDVVDLIEKKPGGIIALLDEACMLPKSTPETFSEKLYHTFKDHKRFMKPKLTRSDFTLVHYAGDVQYQSDQFLDKNKDYVVAEHQDLLNASKCSFVSGLFPPLPKESSKSKFSSIGARFKLQLQQLMETLNSTEPHYIRCVKPNNLLQPTVFDNANVLHQLRSGGVLEAIRVKCAGYPTNRTFIEFLNRFLILAPEILKGEYEAEVACKWILEKKGLTGYQIGKSKVFLRAGQMAELDAHRTRVLGESARMIQGQVRTRLTRERFVLMRRASVNIQANWRGNIARKISKEMRREEAAIKIQKNLRRQIAKKDYGKTKSSALTLQSGVRTMAARHEFRYKLTTRAATVIQAYWRGYSAISDYKKLKRVSLLCKSNLRGRIARKQLGQSKQADRKEETEKERKVELSNRAEEAVDMSFVLHSEQSDDAESGHGRKAKLSIESEDGLDKSSVLHSEQSDDEELGHERKTKLSIESEDGHSDQSDDEEIEHERKTKHCIQAEDGIEKSYVMHSDQSDDEEIGHKRKTKHSIQAEDGIEKSFVVHSDQSDDEEIGHERKTKHAIQVEDGIQKSFVTCSEKPYNTFSVVSQITSPIRDTEIESLTAEVEMLKALLQVEKQRADISERKCAEARELGERRRKRLEETERRVYQLQDSLNRLLYSMSDQFSQLKSILRSPSMSASTMASAPVVRDDLADSSENSEASSSDSDFTFPAPSPSSDNFSTFNPNQLQVIVQDLSTTEAKGTESYDSDKEGGFEDYF.

A Myosin N-terminal SH3-like domain is found at 6–55 (MVDSHVWVEDPERAWIDGVVLNIKGEEAEIKTNDGRDVIANLSRLYPKDT). The Myosin motor domain occupies 60–729 (EGVEDMTRLS…QMAELDAHRT (670 aa)). Residues 154–161 (GESGSGKT) and 207–215 (NNNSSRFGK) contribute to the ATP site. Actin-binding stretches follow at residues 493–527 (LIEK…YHTF), 529–552 (DHKR…AGDV), 587–610 (FPPL…KLQL), and 610–632 (LQQL…KPNN). 6 IQ domains span residues 732–761 (LGES…ASVN), 755–784 (MRRA…EEAA), 780–809 (REEA…SALT), 803–832 (TKSS…TRAA), 828–857 (TTRA…VSLL), and 851–880 (LKRV…ADRK). Disordered stretches follow at residues 869 to 893 (KQLG…ELSN) and 908 to 1042 (EQSD…ERKT). A compositionally biased stretch (basic and acidic residues) spans 876 to 893 (QADRKEETEKERKVELSN). Tandem repeats lie at residues 876 to 908 (QADR…LHSE), 909 to 940 (QSDD…LHSE), 941 to 965 (QSDD…GHSD), 966 to 997 (QSDD…MHSD), 998 to 1029 (QSDD…VHSD), and 1030 to 1061 (QSDD…TCSE). A 6 X 33 AA repeats of Q-S-D-D-x-E-E-x(2)-H-x-R-K-x-K-x(2)-I-x(2)-E-D-G-x(3)-S-x-V-x-H-S-x region spans residues 876–1061 (QADRKEETEK…IQKSFVTCSE (186 aa)). Positions 948–966 (GHERKTKLSIESEDGHSDQ) are enriched in basic and acidic residues. A coiled-coil region spans residues 1079–1142 (DTEIESLTAE…QLQDSLNRLL (64 aa)). Positions 1175 to 1242 (DLADSSENSE…DKEGGFEDYF (68 aa)) are disordered. Positions 1179–1191 (SSENSEASSSDSD) are enriched in low complexity. The span at 1199–1224 (PSSDNFSTFNPNQLQVIVQDLSTTEA) shows a compositional bias: polar residues. The span at 1225–1242 (KGTESYDSDKEGGFEDYF) shows a compositional bias: basic and acidic residues.

Belongs to the TRAFAC class myosin-kinesin ATPase superfamily. Myosin family. Plant myosin class XI subfamily. In terms of assembly, homodimer. In terms of tissue distribution, expressed in flowers and leaves.

The protein resides in the cytoplasm. Myosin heavy chain that is required for the cell cycle-regulated transport of various organelles and proteins for their segregation. Functions by binding with its tail domain to receptor proteins on organelles and exerting force with its N-terminal motor domain against actin filaments, thereby transporting its cargo along polarized actin cables. The polypeptide is Myosin-16 (XI-J) (Arabidopsis thaliana (Mouse-ear cress)).